The primary structure comprises 416 residues: Deferrochelatase (416 aa).

The segment at residues 1 to 28 (MSDEQKKPEQIHRRDILKWGAMAGAAVA) is a signal peptide (tat-type signal). 241–243 (GTG) is a binding site for heme b. The interval 293–318 (QEDTFGRRKSSGAPFGQKKETDPVKL) is disordered. 2 residues coordinate heme b: histidine 326 and arginine 339.

It belongs to the DyP-type peroxidase family. In terms of assembly, component of the iron transporter efeUOB/M complex composed of EfeU, EfeM and EfeB; EfeU is essential for the complex formation. The cofactor is heme b. Exported by the Tat system. The position of the signal peptide cleavage has not been experimentally proven.

The protein resides in the secreted. It localises to the cell membrane. It carries out the reaction heme b + 2 H(+) = protoporphyrin IX + Fe(2+). The enzyme catalyses 2 Fe(2+) + H2O2 + 2 H(+) = 2 Fe(3+) + 2 H2O. In terms of biological role, involved in the recovery of exogenous heme iron. Extracts iron from heme while preserving the protoporphyrin ring intact. Part of the iron transporter system efeUOB/M involved in iron import. Catalyzes the peroxide-mediated oxidation of Fe(2+) into Fe(3+); EfeM binds Fe(3+) and delivers it to the cell membrane permease EfeU. The chain is Deferrochelatase from Bacillus subtilis (strain 168).